The chain runs to 236 residues: Protein-L-isoaspartate O-methyltransferase 1 (236 aa).

Residue S86 is part of the active site.

It belongs to the methyltransferase superfamily. L-isoaspartyl/D-aspartyl protein methyltransferase family.

The protein localises to the cytoplasm. It catalyses the reaction [protein]-L-isoaspartate + S-adenosyl-L-methionine = [protein]-L-isoaspartate alpha-methyl ester + S-adenosyl-L-homocysteine. Catalyzes the methyl esterification of L-isoaspartyl residues in peptides and proteins that result from spontaneous decomposition of normal L-aspartyl and L-asparaginyl residues. It plays a role in the repair and/or degradation of damaged proteins. This chain is Protein-L-isoaspartate O-methyltransferase 1, found in Nitrosospira multiformis (strain ATCC 25196 / NCIMB 11849 / C 71).